A 364-amino-acid polypeptide reads, in one-letter code: tRNA 2-selenouridine synthase (364 aa).

The Rhodanese domain occupies 14-136 (VLNNTPLIDV…AFRNWLMQET (123 aa)). The active-site S-selanylcysteine intermediate is the cysteine 97.

It belongs to the SelU family. As to quaternary structure, monomer.

It carries out the reaction 5-methylaminomethyl-2-thiouridine(34) in tRNA + selenophosphate + (2E)-geranyl diphosphate + H2O + H(+) = 5-methylaminomethyl-2-selenouridine(34) in tRNA + (2E)-thiogeraniol + phosphate + diphosphate. It catalyses the reaction 5-methylaminomethyl-2-thiouridine(34) in tRNA + (2E)-geranyl diphosphate = 5-methylaminomethyl-S-(2E)-geranyl-thiouridine(34) in tRNA + diphosphate. The catalysed reaction is 5-methylaminomethyl-S-(2E)-geranyl-thiouridine(34) in tRNA + selenophosphate + H(+) = 5-methylaminomethyl-2-(Se-phospho)selenouridine(34) in tRNA + (2E)-thiogeraniol. The enzyme catalyses 5-methylaminomethyl-2-(Se-phospho)selenouridine(34) in tRNA + H2O = 5-methylaminomethyl-2-selenouridine(34) in tRNA + phosphate. In terms of biological role, involved in the post-transcriptional modification of the uridine at the wobble position (U34) of tRNA(Lys), tRNA(Glu) and tRNA(Gln). Catalyzes the conversion of 2-thiouridine (S2U-RNA) to 2-selenouridine (Se2U-RNA). Acts in a two-step process involving geranylation of 2-thiouridine (S2U) to S-geranyl-2-thiouridine (geS2U) and subsequent selenation of the latter derivative to 2-selenouridine (Se2U) in the tRNA chain. The sequence is that of tRNA 2-selenouridine synthase from Sulfurovum sp. (strain NBC37-1).